The chain runs to 120 residues: uncharacterized protein (120 aa).

The N-acetyltransferase domain maps to 3–120; that stretch reads IRYKKAFEKI…EKCEICHGSE (118 aa).

This is an uncharacterized protein from Bacillus methanolicus.